The primary structure comprises 65 residues: Large ribosomal subunit protein bL35 (65 aa).

This sequence belongs to the bacterial ribosomal protein bL35 family.

This chain is Large ribosomal subunit protein bL35, found in Polynucleobacter asymbioticus (strain DSM 18221 / CIP 109841 / QLW-P1DMWA-1) (Polynucleobacter necessarius subsp. asymbioticus).